Consider the following 236-residue polypeptide: 2-C-methyl-D-erythritol 4-phosphate cytidylyltransferase (236 aa).

It belongs to the IspD/TarI cytidylyltransferase family. IspD subfamily. In terms of assembly, homodimer.

It carries out the reaction 2-C-methyl-D-erythritol 4-phosphate + CTP + H(+) = 4-CDP-2-C-methyl-D-erythritol + diphosphate. Its pathway is isoprenoid biosynthesis; isopentenyl diphosphate biosynthesis via DXP pathway; isopentenyl diphosphate from 1-deoxy-D-xylulose 5-phosphate: step 2/6. Its function is as follows. Catalyzes the formation of 4-diphosphocytidyl-2-C-methyl-D-erythritol from CTP and 2-C-methyl-D-erythritol 4-phosphate (MEP). This chain is 2-C-methyl-D-erythritol 4-phosphate cytidylyltransferase, found in Salmonella paratyphi A (strain ATCC 9150 / SARB42).